The primary structure comprises 306 residues: Serine/threonine-protein kinase KIN28 (306 aa).

Positions 7–290 constitute a Protein kinase domain; it reads YTKEKKVGEG…AVQCLESDYF (284 aa). Residues 13 to 21 and Lys-36 contribute to the ATP site; that span reads VGEGTYAVV. Asp-129 acts as the Proton acceptor in catalysis. Thr-162 is subject to Phosphothreonine; by CAK.

This sequence belongs to the protein kinase superfamily. CMGC Ser/Thr protein kinase family. CDC2/CDKX subfamily. CCL1 and KIN28 form the TFIIK complex, a component of the TFIIH holo complex. Component of a complex consisting of KIN28, CCL1 and TFB3. Interacts with TFB3. Also interacts with HNT1 and HOG1. Post-translationally, phosphorylation of Thr-162 regulates the affinity of interaction between CCL1, KIN28 and TFB3. Thr-162 phosphorylation does not vary through the cell cycle and is necessary for full kinase activity.

It localises to the nucleus. The enzyme catalyses [DNA-directed RNA polymerase] + ATP = phospho-[DNA-directed RNA polymerase] + ADP + H(+). In terms of biological role, catalytic component of the TFIIK complex (KIN28-CCL1 dimer) which is the protein kinase component of transcription factor IIH (TFIIH) and phosphorylates the C-terminal domain of RNA polymerase II during transition from transcription to elongation after preinitiation complex (PIC) formation, thereby positively regulating transcription. TFIIH (or factor B) is essential for both basal and activated transcription, and is involved in nucleotide excision repair (NER) of damaged DNA. TFIIH has DNA-dependent ATPase activity and is essential for polymerase II transcription in vitro. Essential for cell proliferation. This chain is Serine/threonine-protein kinase KIN28 (KIN28), found in Saccharomyces cerevisiae (strain ATCC 204508 / S288c) (Baker's yeast).